Reading from the N-terminus, the 298-residue chain is Ornithine carbamoyltransferase (298 aa).

Carbamoyl phosphate contacts are provided by residues 50–53, Gln77, Arg101, and 128–131; these read STRT and HPCQ. Residues Asn159, Asp216, and 220 to 221 each bind L-ornithine; that span reads SM. Carbamoyl phosphate-binding positions include 256-257 and Arg284; that span reads CL.

It belongs to the aspartate/ornithine carbamoyltransferase superfamily. OTCase family.

It is found in the cytoplasm. It carries out the reaction carbamoyl phosphate + L-ornithine = L-citrulline + phosphate + H(+). It participates in amino-acid biosynthesis; L-arginine biosynthesis; L-arginine from L-ornithine and carbamoyl phosphate: step 1/3. In terms of biological role, reversibly catalyzes the transfer of the carbamoyl group from carbamoyl phosphate (CP) to the N(epsilon) atom of ornithine (ORN) to produce L-citrulline. In Methylococcus capsulatus (strain ATCC 33009 / NCIMB 11132 / Bath), this protein is Ornithine carbamoyltransferase.